Consider the following 646-residue polypeptide: Exoribonuclease 2 (646 aa).

One can recognise an RNB domain in the interval 191–518 (RIDLTALDFV…NHRLLKAIIQ (328 aa)). Residues 563–645 (DKTFSAEIVD…ETRNIVARPV (83 aa)) enclose the S1 motif domain.

This sequence belongs to the RNR ribonuclease family. RNase II subfamily.

Its subcellular location is the cytoplasm. It catalyses the reaction Exonucleolytic cleavage in the 3'- to 5'-direction to yield nucleoside 5'-phosphates.. In terms of biological role, involved in mRNA degradation. Hydrolyzes single-stranded polyribonucleotides processively in the 3' to 5' direction. This Xenorhabdus bovienii (strain SS-2004) (Xenorhabdus nematophila subsp. bovienii) protein is Exoribonuclease 2.